Consider the following 1378-residue polypeptide: DNA-directed RNA polymerase subunit beta (1378 aa).

It belongs to the RNA polymerase beta chain family. In terms of assembly, the RNAP catalytic core consists of 2 alpha, 1 beta, 1 beta' and 1 omega subunit. When a sigma factor is associated with the core the holoenzyme is formed, which can initiate transcription.

The enzyme catalyses RNA(n) + a ribonucleoside 5'-triphosphate = RNA(n+1) + diphosphate. DNA-dependent RNA polymerase catalyzes the transcription of DNA into RNA using the four ribonucleoside triphosphates as substrates. The polypeptide is DNA-directed RNA polymerase subunit beta (Campylobacter jejuni (strain RM1221)).